Here is a 166-residue protein sequence, read N- to C-terminus: Lipoprotein signal peptidase (166 aa).

The next 3 membrane-spanning stretches (helical) occupy residues 12–32 (WLWV…LILQ), 70–90 (WFFS…MYRS), and 102–122 (ALII…GFVV). Residues Asp-123 and Asp-141 contribute to the active site. A helical membrane pass occupies residues 137–157 (FNLADSAICIGAALIVLEGFL).

This sequence belongs to the peptidase A8 family.

It localises to the cell inner membrane. The enzyme catalyses Release of signal peptides from bacterial membrane prolipoproteins. Hydrolyzes -Xaa-Yaa-Zaa-|-(S,diacylglyceryl)Cys-, in which Xaa is hydrophobic (preferably Leu), and Yaa (Ala or Ser) and Zaa (Gly or Ala) have small, neutral side chains.. It participates in protein modification; lipoprotein biosynthesis (signal peptide cleavage). Functionally, this protein specifically catalyzes the removal of signal peptides from prolipoproteins. This Klebsiella pneumoniae (strain 342) protein is Lipoprotein signal peptidase.